Reading from the N-terminus, the 850-residue chain is Receptor-like serine/threonine-protein kinase SD1-8 (850 aa).

Residues 1–26 form the signal peptide; sequence MRGLPNFYHSYTFFFFFLLILFPAYS. The Extracellular segment spans residues 27 to 441; that stretch reads ISANTLSASE…LEDKRNRSAK (415 aa). A Bulb-type lectin domain is found at 31 to 153; the sequence is TLSASESLTI…KNSAPDGVLW (123 aa). Asn43, Asn118, and Asn242 each carry an N-linked (GlcNAc...) asparagine glycan. Residues 292 to 328 form the EGF-like domain; it reads PKDQCDEYKECGVYGYCDSNTSPVCNCIKGFKPRNPQ. Cystine bridges form between Cys296-Cys308, Cys302-Cys316, Cys378-Cys403, and Cys382-Cys388. One can recognise a PAN domain in the interval 347–428; that stretch reads CGGGDGFVRL…GGQDLYVRLA (82 aa). N-linked (GlcNAc...) asparagine glycosylation is found at Asn387 and Asn437. A helical membrane pass occupies residues 442-462; that stretch reads IIGSSIGVSVLLLLSFIIFFL. Topologically, residues 463-850 are cytoplasmic; it reads WKRKQKRSIL…QITVSVLDAR (388 aa). A Protein kinase domain is found at 526–807; the sequence is FSNANKLGQG…LMLGSESTTI (282 aa). Residues 532–540 and Lys554 contribute to the ATP site; that span reads LGQGGFGIV. The tract at residues 615 to 632 is caM-binding; it reads SRNSKLNWQMRFDIINGI. Asp651 (proton acceptor) is an active-site residue.

The protein belongs to the protein kinase superfamily. Ser/Thr protein kinase family. As to quaternary structure, interacts with PUB9, PUB13, PUB14 and PUB38. Expressed in the root-hypocotyl transition zone, at the base of lateral roots, axillary buds and pedicels.

The protein resides in the cell membrane. The catalysed reaction is L-seryl-[protein] + ATP = O-phospho-L-seryl-[protein] + ADP + H(+). It carries out the reaction L-threonyl-[protein] + ATP = O-phospho-L-threonyl-[protein] + ADP + H(+). Its function is as follows. Involved in the regulation of cellular expansion and differentiation. The chain is Receptor-like serine/threonine-protein kinase SD1-8 (SD18) from Arabidopsis thaliana (Mouse-ear cress).